A 130-amino-acid chain; its full sequence is Holo-[acyl-carrier-protein] synthase (130 aa).

Mg(2+)-binding residues include Asp-9 and Glu-58.

It belongs to the P-Pant transferase superfamily. AcpS family. Mg(2+) is required as a cofactor.

It is found in the cytoplasm. The enzyme catalyses apo-[ACP] + CoA = holo-[ACP] + adenosine 3',5'-bisphosphate + H(+). In terms of biological role, transfers the 4'-phosphopantetheine moiety from coenzyme A to a Ser of acyl-carrier-protein. The chain is Holo-[acyl-carrier-protein] synthase from Mycobacterium bovis (strain ATCC BAA-935 / AF2122/97).